The primary structure comprises 583 residues: Ferredoxin--nitrite reductase, chloroplastic (583 aa).

A chloroplast-targeting transit peptide spans Met-1–Arg-22. 4 residues coordinate [4Fe-4S] cluster: Cys-461, Cys-467, Cys-502, and Cys-506. Position 506 (Cys-506) interacts with siroheme.

The protein belongs to the nitrite and sulfite reductase 4Fe-4S domain family. Monomer. Requires siroheme as cofactor. The cofactor is [4Fe-4S] cluster.

It is found in the plastid. The protein resides in the chloroplast. The enzyme catalyses 6 oxidized [2Fe-2S]-[ferredoxin] + NH4(+) + 2 H2O = nitrite + 6 reduced [2Fe-2S]-[ferredoxin] + 8 H(+). The protein operates within nitrogen metabolism; nitrate reduction (assimilation). The chain is Ferredoxin--nitrite reductase, chloroplastic (NIR1) from Betula pendula (European white birch).